We begin with the raw amino-acid sequence, 560 residues long: DNA ligase B (560 aa).

The N6-AMP-lysine intermediate role is filled by lysine 124.

This sequence belongs to the NAD-dependent DNA ligase family. LigB subfamily.

The enzyme catalyses NAD(+) + (deoxyribonucleotide)n-3'-hydroxyl + 5'-phospho-(deoxyribonucleotide)m = (deoxyribonucleotide)n+m + AMP + beta-nicotinamide D-nucleotide.. Catalyzes the formation of phosphodiester linkages between 5'-phosphoryl and 3'-hydroxyl groups in double-stranded DNA using NAD as a coenzyme and as the energy source for the reaction. The protein is DNA ligase B of Shigella flexneri serotype 5b (strain 8401).